Reading from the N-terminus, the 204-residue chain is Inner membrane-spanning protein YciB (204 aa).

6 consecutive transmembrane segments (helical) span residues A3 to F23, I45 to I65, L70 to W90, L107 to F127, W145 to T165, and W168 to M188.

It belongs to the YciB family.

It localises to the cell inner membrane. Functionally, plays a role in cell envelope biogenesis, maintenance of cell envelope integrity and membrane homeostasis. This Agrobacterium fabrum (strain C58 / ATCC 33970) (Agrobacterium tumefaciens (strain C58)) protein is Inner membrane-spanning protein YciB.